A 52-amino-acid polypeptide reads, in one-letter code: ERMES regulator 1 (52 aa).

Over 1 to 27 (MIFFFNQIRSIFTALHTPTQQIQLSRR) the chain is Mitochondrial intermembrane. A helical membrane pass occupies residues 28–46 (AFFQFLGYLGSCVVISLAA). The Cytoplasmic segment spans residues 47 to 52 (QSKYVQ).

Belongs to the EMR1 family.

The protein resides in the mitochondrion outer membrane. In terms of biological role, mediates the formation of endoplasmic reticulum (ER)-mitochondria encounter structure (ERMES) foci, thereby contributing to the formation of ER-mitochondrial contact sites. In Saccharomyces cerevisiae (strain ATCC 204508 / S288c) (Baker's yeast), this protein is ERMES regulator 1.